Consider the following 476-residue polypeptide: Proline--tRNA ligase 2 (476 aa).

It belongs to the class-II aminoacyl-tRNA synthetase family. ProS type 3 subfamily. As to quaternary structure, homodimer.

It localises to the cytoplasm. It carries out the reaction tRNA(Pro) + L-proline + ATP = L-prolyl-tRNA(Pro) + AMP + diphosphate. Catalyzes the attachment of proline to tRNA(Pro) in a two-step reaction: proline is first activated by ATP to form Pro-AMP and then transferred to the acceptor end of tRNA(Pro). This is Proline--tRNA ligase 2 from Bacillus thuringiensis (strain Al Hakam).